The primary structure comprises 618 residues: Sodium-coupled monocarboxylate transporter 2 (618 aa).

The Extracellular segment spans residues M1–W9. The chain crosses the membrane as a helical span at residues D10–I30. At K31–Q47 the chain is on the cytoplasmic side. A helical membrane pass occupies residues M48–L68. The Extracellular segment spans residues G69 to L82. Residues V83–F103 form a helical membrane-spanning segment. At Y104 to T128 the chain is on the cytoplasmic side. A helical membrane pass occupies residues V129–A149. Topologically, residues L150 to D157 are extracellular. A helical membrane pass occupies residues L158–L178. The Cytoplasmic segment spans residues K179 to A180. A helical transmembrane segment spans residues V181–I201. The Extracellular segment spans residues Q202–R235. Residues H236–N256 traverse the membrane as a helical segment. Over Q257–A275 the chain is Cytoplasmic. The helical transmembrane segment at L276–I296 threads the bilayer. The Extracellular portion of the chain corresponds to M297–Y321. A helical transmembrane segment spans residues F322–F342. The Cytoplasmic portion of the chain corresponds to S343–C385. Residues L386–V406 traverse the membrane as a helical segment. Topologically, residues Q407–S411 are extracellular. A helical transmembrane segment spans residues I412–F432. Over V433–G437 the chain is Cytoplasmic. A helical membrane pass occupies residues A438–I458. Residues Y459–Y504 lie on the Extracellular side of the membrane. Residue N480 is glycosylated (N-linked (GlcNAc...) asparagine). A helical membrane pass occupies residues L505–I525. Topologically, residues T526–F618 are cytoplasmic.

The protein belongs to the sodium:solute symporter (SSF) (TC 2.A.21) family.

Its subcellular location is the apical cell membrane. It catalyses the reaction (S)-lactate(out) + Na(+)(out) = (S)-lactate(in) + Na(+)(in). The catalysed reaction is nicotinate(out) + Na(+)(out) = nicotinate(in) + Na(+)(in). The enzyme catalyses pyruvate(out) + Na(+)(out) = pyruvate(in) + Na(+)(in). It carries out the reaction propanoate(out) + Na(+)(out) = propanoate(in) + Na(+)(in). It catalyses the reaction butanoate(out) + Na(+)(out) = butanoate(in) + Na(+)(in). The catalysed reaction is acetoacetate(out) + Na(+)(out) = acetoacetate(in) + Na(+)(in). Its activity is regulated as follows. Cotransport of monocarboxylates and nicotinate strongly inhibited by ibuprofen, fenoprofen and ketoprofen. Acts as an electroneutral and low-affinity sodium (Na(+))-dependent sodium-coupled solute transporter. Catalyzes the transport across the plasma membrane of many monocarboxylates such as lactate, pyruvate, nicotinate, propionate, butyrate and beta-D-hydroxybutyrate. May be responsible for the first step of reabsorption of monocarboxylates from the lumen of the proximal tubule of the kidney and the small intestine. May play also a role in monocarboxylates transport in the retina. In Homo sapiens (Human), this protein is Sodium-coupled monocarboxylate transporter 2.